Reading from the N-terminus, the 1978-residue chain is Centrosomal protein Cep290 (1978 aa).

The necessary and sufficient for function in ciliogenesis, transition zone (TZ) assembly, and recruitment of DZP1 and Mks1 to the TZ. Also required for subcellular localization to the cilium basal body stretch occupies residues 1–650 (MSMDIPETVS…SLCEVPEIAE (650 aa)). 2 coiled-coil regions span residues 76-384 (DRRL…KSQQ) and 471-505 (IERL…LQQD). The interval 271 to 296 (QLEGKSISSGQTNSSNSQSQQEEEHA) is disordered. Positions 276 to 290 (SISSGQTNSSNSQSQ) are enriched in low complexity. The segment at 663-688 (ATRPSSPTEATMGLRRPTVPDPEEKP) is disordered. Coiled coils occupy residues 853 to 887 (FEEQ…ANEQ), 922 to 970 (LAKV…TQQD), and 1192 to 1233 (ADAV…SRSE). Positions 1313-1324 (KEKLRQKPEVPV) are enriched in basic and acidic residues. Positions 1313-1397 (KEKLRQKPEV…EKQDTEELKE (85 aa)) are disordered. A compositionally biased stretch (low complexity) spans 1329 to 1341 (STDSRSSSSSDSS). Acidic residues predominate over residues 1379–1391 (VTEEPEGEEEKQD). Coiled-coil stretches lie at residues 1405 to 1439 (IKDL…CQER) and 1501 to 1654 (LNRT…LESK). 2 disordered regions span residues 1684–1714 (VGVS…AHHH) and 1859–1884 (LKDG…RLQQ). The segment covering 1693–1708 (PSESPETYTGPSSECS) has biased composition (polar residues). Residues 1726–1935 (IEALKSRIEL…KEQLVKKTQL (210 aa)) adopt a coiled-coil conformation.

As to quaternary structure, interacts (via N-terminus) with DZIP1. Expressed in sensory neurons type I and in germ cells (at protein level).

It is found in the cytoplasm. Its subcellular location is the cytoskeleton. It localises to the cilium basal body. The protein localises to the microtubule organizing center. The protein resides in the centrosome. It is found in the centriole. Essential for ciliogenesis in sensory neurons and spermatocytes. During neuron and spermatocyte ciliogenesis, essential for initiating transition zone (TZ) assembly and is required for the formation of diverse connections between microtubules and between microtubules and the membrane. Regulates TZ assembly by recruiting DZIP1 to the plasma membrane where it promotes early ciliary membrane formation resulting in the initiation of TZ assembly. In Drosophila melanogaster (Fruit fly), this protein is Centrosomal protein Cep290.